Here is a 75-residue protein sequence, read N- to C-terminus: Small ribosomal subunit protein bS18 (75 aa).

This sequence belongs to the bacterial ribosomal protein bS18 family. Part of the 30S ribosomal subunit. Forms a tight heterodimer with protein bS6.

In terms of biological role, binds as a heterodimer with protein bS6 to the central domain of the 16S rRNA, where it helps stabilize the platform of the 30S subunit. The sequence is that of Small ribosomal subunit protein bS18 from Psychrobacter sp. (strain PRwf-1).